Here is a 204-residue protein sequence, read N- to C-terminus: MKAPPPFYEGDTLDVAKKLLGQKLVHIVDGVKRSGYIVEVEAYKGPDDKAAHSYGGRRTERTEIMFGAPGHAYVYLIYGMYHCFNVITAPVGIPQGVLIRALEPAEGVKEMKLARYGKMELTKTQYKNLTNGPGKLCRALNITLEERGLSLQGDKLYIELVPESQHLSSQYEIVKGPRINIDYAEEAVHYPWRFYFQNNPFISK.

The protein belongs to the DNA glycosylase MPG family.

In Bacillus cytotoxicus (strain DSM 22905 / CIP 110041 / 391-98 / NVH 391-98), this protein is Putative 3-methyladenine DNA glycosylase.